The chain runs to 408 residues: Multidrug resistance protein MdtG (408 aa).

The next 10 helical transmembrane spans lie at 13–33 (LYIA…VMPF), 51–71 (LWSG…SPFW), 89–109 (LGMA…QFLL), 112–132 (AALG…AIQV), 138–158 (GWAL…GPLL), 170–190 (PVFF…FFFI), 221–241 (LFVT…ILTL), 253–273 (LAFI…LSAP), 287–307 (ILVA…FVQS), and 375–395 (AVFL…WLSL).

This sequence belongs to the major facilitator superfamily. DHA1 family. MdtG (TC 2.A.1.2.20) subfamily.

It localises to the cell inner membrane. This chain is Multidrug resistance protein MdtG, found in Dickeya zeae (strain Ech586) (Dickeya dadantii (strain Ech586)).